The primary structure comprises 64 residues: Small ribosomal subunit protein eS17 (64 aa).

Belongs to the eukaryotic ribosomal protein eS17 family.

This is Small ribosomal subunit protein eS17 from Methanospirillum hungatei JF-1 (strain ATCC 27890 / DSM 864 / NBRC 100397 / JF-1).